Here is a 450-residue protein sequence, read N- to C-terminus: Tubulin alpha chain (450 aa).

Glutamine 11 is a GTP binding site. At lysine 40 the chain carries N6-acetyllysine. GTP is bound by residues glutamate 71, serine 140, glycine 144, threonine 145, threonine 179, asparagine 206, and asparagine 228. Mg(2+) is bound at residue glutamate 71. Residue glutamate 254 is part of the active site.

The protein belongs to the tubulin family. As to quaternary structure, dimer of alpha and beta chains. A typical microtubule is a hollow water-filled tube with an outer diameter of 25 nm and an inner diameter of 15 nM. Alpha-beta heterodimers associate head-to-tail to form protofilaments running lengthwise along the microtubule wall with the beta-tubulin subunit facing the microtubule plus end conferring a structural polarity. Microtubules usually have 13 protofilaments but different protofilament numbers can be found in some organisms and specialized cells. Requires Mg(2+) as cofactor. Post-translationally, undergoes a tyrosination/detyrosination cycle, the cyclic removal and re-addition of a C-terminal tyrosine residue by the enzymes tubulin tyrosine carboxypeptidase (TTCP) and tubulin tyrosine ligase (TTL), respectively. In terms of processing, acetylation of alpha chains at Lys-40 stabilizes microtubules and affects affinity and processivity of microtubule motors. This modification has a role in multiple cellular functions, ranging from cell motility, cell cycle progression or cell differentiation to intracellular trafficking and signaling.

Its subcellular location is the cytoplasm. The protein localises to the cytoskeleton. It carries out the reaction GTP + H2O = GDP + phosphate + H(+). In terms of biological role, tubulin is the major constituent of microtubules, a cylinder consisting of laterally associated linear protofilaments composed of alpha- and beta-tubulin heterodimers. Microtubules grow by the addition of GTP-tubulin dimers to the microtubule end, where a stabilizing cap forms. Below the cap, tubulin dimers are in GDP-bound state, owing to GTPase activity of alpha-tubulin. This Haemonchus contortus (Barber pole worm) protein is Tubulin alpha chain.